The sequence spans 141 residues: Hemoglobin subunit alpha (141 aa).

Positions 1–141 (VLSAADKSNV…VSTVLTSKYR (141 aa)) constitute a Globin domain. S3 carries the post-translational modification Phosphoserine. Residues K7 and K11 each carry the N6-succinyllysine modification. An N6-acetyllysine; alternate modification is found at K16. Residue K16 is modified to N6-succinyllysine; alternate. Y24 carries the phosphotyrosine modification. At S35 the chain carries Phosphoserine. K40 carries the post-translational modification N6-succinyllysine. S49 is subject to Phosphoserine. H58 contacts O2. H87 serves as a coordination point for heme b. S102 is modified (phosphoserine). Position 108 is a phosphothreonine (T108). A Phosphoserine modification is found at S124. Phosphothreonine is present on residues T134 and T137. Phosphoserine is present on S138.

This sequence belongs to the globin family. As to quaternary structure, heterotetramer of two alpha chains and two beta chains. In terms of tissue distribution, red blood cells.

In terms of biological role, involved in oxygen transport from the lung to the various peripheral tissues. Hemopressin acts as an antagonist peptide of the cannabinoid receptor CNR1. Hemopressin-binding efficiently blocks cannabinoid receptor CNR1 and subsequent signaling. The sequence is that of Hemoglobin subunit alpha (HBA) from Rangifer tarandus (Reindeer).